A 65-amino-acid chain; its full sequence is Large ribosomal subunit protein bL35 (65 aa).

The segment covering 1–10 (MPKMKTDRGA) has biased composition (basic and acidic residues). The disordered stretch occupies residues 1–24 (MPKMKTDRGAAKRFKKTGSGGFKC).

This sequence belongs to the bacterial ribosomal protein bL35 family.

This chain is Large ribosomal subunit protein bL35, found in Tolumonas auensis (strain DSM 9187 / NBRC 110442 / TA 4).